We begin with the raw amino-acid sequence, 403 residues long: uncharacterized protein (403 aa).

The first 26 residues, 1–26, serve as a signal peptide directing secretion; it reads MYKFKTNLFLVIYFIAIFSIESSISS. Residues 27 to 381 lie on the Extracellular side of the membrane; the sequence is FNTEINSNSN…DSDNSSFGIS (355 aa). N-linked (GlcNAc...) asparagine glycans are attached at residues Asn58, Asn90, Asn93, Asn124, Asn137, Asn371, and Asn375. A helical membrane pass occupies residues 382-402; it reads IQKYLNSFLNSFIIILIINII. Ile403 is a topological domain (cytoplasmic).

Its subcellular location is the membrane. This is an uncharacterized protein from Dictyostelium discoideum (Social amoeba).